Here is a 74-residue protein sequence, read N- to C-terminus: UPF0741 protein BcerKBAB4_5177 (74 aa).

It belongs to the UPF0741 family.

The sequence is that of UPF0741 protein BcerKBAB4_5177 from Bacillus mycoides (strain KBAB4) (Bacillus weihenstephanensis).